The sequence spans 213 residues: FMN-dependent NADH:quinone oxidoreductase 1 (213 aa).

Position 18–20 (Ser-18–Ser-20) interacts with FMN.

Belongs to the azoreductase type 1 family. As to quaternary structure, homodimer. The cofactor is FMN.

It carries out the reaction 2 a quinone + NADH + H(+) = 2 a 1,4-benzosemiquinone + NAD(+). It catalyses the reaction N,N-dimethyl-1,4-phenylenediamine + anthranilate + 2 NAD(+) = 2-(4-dimethylaminophenyl)diazenylbenzoate + 2 NADH + 2 H(+). Functionally, quinone reductase that provides resistance to thiol-specific stress caused by electrophilic quinones. In terms of biological role, also exhibits azoreductase activity. Catalyzes the reductive cleavage of the azo bond in aromatic azo compounds to the corresponding amines. This Bacillus cereus (strain ATCC 10987 / NRS 248) protein is FMN-dependent NADH:quinone oxidoreductase 1.